We begin with the raw amino-acid sequence, 127 residues long: Mediator of RNA polymerase II transcription subunit 9 (127 aa).

The stretch at 95–119 forms a coiled coil; that stretch reads QKEQEIEAKKRVHRQLRQRVEEIAG.

The protein belongs to the Mediator complex subunit 9 family. As to quaternary structure, component of the Mediator complex.

It is found in the nucleus. Its function is as follows. Component of the Mediator complex, a coactivator involved in the regulated transcription of nearly all RNA polymerase II-dependent genes. Mediator functions as a bridge to convey information from gene-specific regulatory proteins to the basal RNA polymerase II transcription machinery. Mediator is recruited to promoters by direct interactions with regulatory proteins and serves as a scaffold for the assembly of a functional preinitiation complex with RNA polymerase II and the general transcription factors. This chain is Mediator of RNA polymerase II transcription subunit 9 (CSE2), found in Eremothecium gossypii (strain ATCC 10895 / CBS 109.51 / FGSC 9923 / NRRL Y-1056) (Yeast).